We begin with the raw amino-acid sequence, 278 residues long: Heat stress transcription factor C-2b (278 aa).

Residues 105 to 114 (AAGGGGGGGG) are compositionally biased toward gly residues. The disordered stretch occupies residues 105–132 (AAGGGGGGGGGKRRDASADGGGGGGDED). A hydrophobic repeat HR-A/B region spans residues 143 to 179 (LKQEQRTIDDRVAAMWRRVQETERRPKQMLAFLLKVV). Residues 219-222 (KRAR) carry the Nuclear localization signal motif.

Belongs to the HSF family. Class C subfamily. As to quaternary structure, homotrimer. Exhibits temperature-dependent phosphorylation.

Its subcellular location is the nucleus. Transcriptional regulator that specifically binds DNA of heat shock promoter elements (HSE). The protein is Heat stress transcription factor C-2b (HSFC2B) of Oryza sativa subsp. japonica (Rice).